Reading from the N-terminus, the 158-residue chain is MSHGKRTDMLPEIAAAVGFLTSLLRTRGCVSEQRLKVFSRALQDALTDHYKHHWFPEKPSKGSGYRCIRINHKMDPIISKVASQIGLSQPQLHQLLPSELTLWVDPYEVSYRIGEDGSICVLYEEAPVATSYGLLTCKNQMMLGRSSPSKNYVMTVSS.

Ser147 carries the post-translational modification Phosphoserine; by MAPK1 and MAPK3. Position 149 is a phosphoserine; by MAPK14 (Ser149).

The protein belongs to the BTG family. As to quaternary structure, interacts with PRKCABP. Interacts with CNOT7 and CNOT8; indicative for an association with the CCR4-NOT complex. Interacts with PIN1, inducing mitochondrial depolarization. Phosphorylated at Ser-147 by MAPK1/ERK2 and MAPK3/ERK1, and at Ser-149 by MAPK14, leading to PIN1-binding and mitochondrial depolarization. As to expression, in brain at embryonic day 13.5, placenta, amnion, and spleen, which are proliferating and/or differentiating.

Its function is as follows. Anti-proliferative protein; the function is mediated by association with deadenylase subunits of the CCR4-NOT complex. Activates mRNA deadenylation in a CNOT6 and CNOT7-dependent manner. In vitro can inhibit deadenylase activity of CNOT7 and CNOT8. Involved in cell cycle regulation. Could be involved in the growth arrest and differentiation of the neuronal precursors. Modulates transcription regulation mediated by ESR1. Involved in mitochondrial depolarization and neurite outgrowth. This is Protein BTG2 (Btg2) from Rattus norvegicus (Rat).